Consider the following 273-residue polypeptide: Orotidine 5'-phosphate decarboxylase (273 aa).

Lys96 (proton donor) is an active-site residue.

This sequence belongs to the OMP decarboxylase family. Type 2 subfamily.

It carries out the reaction orotidine 5'-phosphate + H(+) = UMP + CO2. It participates in pyrimidine metabolism; UMP biosynthesis via de novo pathway; UMP from orotate: step 2/2. The sequence is that of Orotidine 5'-phosphate decarboxylase from Flavobacterium johnsoniae (strain ATCC 17061 / DSM 2064 / JCM 8514 / BCRC 14874 / CCUG 350202 / NBRC 14942 / NCIMB 11054 / UW101) (Cytophaga johnsonae).